The chain runs to 429 residues: Adenylosuccinate synthetase (429 aa).

Residues 12–18 and 40–42 each bind GTP; these read GDEGKGK and GHT. D13 acts as the Proton acceptor in catalysis. Mg(2+) is bound by residues D13 and G40. Residues 13-16, 38-41, T128, R142, Q223, T238, and R302 contribute to the IMP site; these read DEGK and NAGH. H41 acts as the Proton donor in catalysis. 298–304 serves as a coordination point for substrate; that stretch reads TVTGRPR. GTP-binding positions include R304, 330–332, and 412–414; these read LLD and SVG.

This sequence belongs to the adenylosuccinate synthetase family. In terms of assembly, homodimer. Requires Mg(2+) as cofactor.

The protein resides in the cytoplasm. The enzyme catalyses IMP + L-aspartate + GTP = N(6)-(1,2-dicarboxyethyl)-AMP + GDP + phosphate + 2 H(+). The protein operates within purine metabolism; AMP biosynthesis via de novo pathway; AMP from IMP: step 1/2. Functionally, plays an important role in the de novo pathway of purine nucleotide biosynthesis. Catalyzes the first committed step in the biosynthesis of AMP from IMP. This chain is Adenylosuccinate synthetase, found in Limosilactobacillus fermentum (strain NBRC 3956 / LMG 18251) (Lactobacillus fermentum).